Reading from the N-terminus, the 185-residue chain is Large ribosomal subunit protein uL5 (185 aa).

This sequence belongs to the universal ribosomal protein uL5 family. In terms of assembly, part of the 50S ribosomal subunit; part of the 5S rRNA/L5/L18/L25 subcomplex. Contacts the 5S rRNA and the P site tRNA. Forms a bridge to the 30S subunit in the 70S ribosome.

This is one of the proteins that bind and probably mediate the attachment of the 5S RNA into the large ribosomal subunit, where it forms part of the central protuberance. In the 70S ribosome it contacts protein S13 of the 30S subunit (bridge B1b), connecting the 2 subunits; this bridge is implicated in subunit movement. Contacts the P site tRNA; the 5S rRNA and some of its associated proteins might help stabilize positioning of ribosome-bound tRNAs. In Treponema pallidum (strain Nichols), this protein is Large ribosomal subunit protein uL5.